The chain runs to 289 residues: UTP--glucose-1-phosphate uridylyltransferase 2 (289 aa).

This sequence belongs to the UDPGP type 2 family.

The enzyme catalyses alpha-D-glucose 1-phosphate + UTP + H(+) = UDP-alpha-D-glucose + diphosphate. Its pathway is glycolipid metabolism; diglucosyl-diacylglycerol biosynthesis. Functionally, catalyzes the formation of UDP-glucose from glucose-1-phosphate and UTP. This is an intermediate step in the biosynthesis of diglucosyl-diacylglycerol (Glc2-DAG), i.e. a glycolipid found in the membrane, which is also used as a membrane anchor for lipoteichoic acid (LTA). The chain is UTP--glucose-1-phosphate uridylyltransferase 2 (gtaB2) from Staphylococcus saprophyticus subsp. saprophyticus (strain ATCC 15305 / DSM 20229 / NCIMB 8711 / NCTC 7292 / S-41).